The sequence spans 353 residues: Nicotinate-nucleotide--dimethylbenzimidazole phosphoribosyltransferase (353 aa).

Residue glutamate 318 is the Proton acceptor of the active site.

It belongs to the CobT family.

The catalysed reaction is 5,6-dimethylbenzimidazole + nicotinate beta-D-ribonucleotide = alpha-ribazole 5'-phosphate + nicotinate + H(+). The protein operates within nucleoside biosynthesis; alpha-ribazole biosynthesis; alpha-ribazole from 5,6-dimethylbenzimidazole: step 1/2. Catalyzes the synthesis of alpha-ribazole-5'-phosphate from nicotinate mononucleotide (NAMN) and 5,6-dimethylbenzimidazole (DMB). The sequence is that of Nicotinate-nucleotide--dimethylbenzimidazole phosphoribosyltransferase from Chloroflexus aggregans (strain MD-66 / DSM 9485).